We begin with the raw amino-acid sequence, 78 residues long: MASLIQVRDLLALRGRMEAAQISQALNTPQPMINAMLQQLESMGKAVRIQEEPDGCLSGSCKSCPEGKACLREWWALR.

Iron-sulfur cluster contacts are provided by C56, C61, C64, and C70.

It belongs to the FeoC family.

In terms of biological role, may function as a transcriptional regulator that controls feoABC expression. The chain is Probable [Fe-S]-dependent transcriptional repressor from Escherichia coli O17:K52:H18 (strain UMN026 / ExPEC).